A 295-amino-acid polypeptide reads, in one-letter code: Protoheme IX farnesyltransferase (295 aa).

Transmembrane regions (helical) follow at residues 27–47, 48–68, 93–115, 119–136, 147–167, 175–195, 219–239, 247–267, and 275–295; these read IMYLVVLTGITGMIIAPGNIH, PFIGIISTLCIALGSGAAGAI, IARSTAIELGLVLSVISVTVMMI, YLSGILLAISIGFYSLVY, NIVIGGIAGALPPIIGWTSVT, LILFLIIFVWTPPHFWALSLL, IYILVYSIILFIITLLPGIFL, TCAIPLGMTFVFHAFKVFVSI, and MFTYSIAYLFILFICIIISSF.

It belongs to the UbiA prenyltransferase family. Protoheme IX farnesyltransferase subfamily.

The protein localises to the cell inner membrane. It carries out the reaction heme b + (2E,6E)-farnesyl diphosphate + H2O = Fe(II)-heme o + diphosphate. It participates in porphyrin-containing compound metabolism; heme O biosynthesis; heme O from protoheme: step 1/1. In terms of biological role, converts heme B (protoheme IX) to heme O by substitution of the vinyl group on carbon 2 of heme B porphyrin ring with a hydroxyethyl farnesyl side group. This Ehrlichia chaffeensis (strain ATCC CRL-10679 / Arkansas) protein is Protoheme IX farnesyltransferase.